The sequence spans 675 residues: DNA ligase (675 aa).

Residues 33–37 (DAEYD), 82–83 (SL), and Glu-115 contribute to the NAD(+) site. The active-site N6-AMP-lysine intermediate is Lys-117. NAD(+) is bound by residues Arg-138, Glu-175, Lys-293, and Lys-317. Residues Cys-411, Cys-414, Cys-429, and Cys-435 each contribute to the Zn(2+) site. Positions 594–675 (IADNPLKDKT…LIGYFTTIVS (82 aa)) constitute a BRCT domain.

It belongs to the NAD-dependent DNA ligase family. LigA subfamily. It depends on Mg(2+) as a cofactor. Mn(2+) serves as cofactor.

The catalysed reaction is NAD(+) + (deoxyribonucleotide)n-3'-hydroxyl + 5'-phospho-(deoxyribonucleotide)m = (deoxyribonucleotide)n+m + AMP + beta-nicotinamide D-nucleotide.. DNA ligase that catalyzes the formation of phosphodiester linkages between 5'-phosphoryl and 3'-hydroxyl groups in double-stranded DNA using NAD as a coenzyme and as the energy source for the reaction. It is essential for DNA replication and repair of damaged DNA. This is DNA ligase from Glaesserella parasuis serovar 5 (strain SH0165) (Haemophilus parasuis).